The sequence spans 119 residues: Dihydroneopterin aldolase (119 aa).

Substrate is bound by residues Glu-21, Tyr-53, and 72-73 (IE). Lys-99 serves as the catalytic Proton donor/acceptor.

The protein belongs to the DHNA family.

The enzyme catalyses 7,8-dihydroneopterin = 6-hydroxymethyl-7,8-dihydropterin + glycolaldehyde. The protein operates within cofactor biosynthesis; tetrahydrofolate biosynthesis; 2-amino-4-hydroxy-6-hydroxymethyl-7,8-dihydropteridine diphosphate from 7,8-dihydroneopterin triphosphate: step 3/4. Functionally, catalyzes the conversion of 7,8-dihydroneopterin to 6-hydroxymethyl-7,8-dihydropterin. This Streptococcus pyogenes serotype M1 protein is Dihydroneopterin aldolase (folB).